The sequence spans 384 residues: S-adenosylmethionine synthase (384 aa).

Residue His-15 participates in ATP binding. Residue Asp-17 participates in Mg(2+) binding. Residue Glu-43 participates in K(+) binding. L-methionine-binding residues include Glu-56 and Gln-99. Residues 99-109 (QSPDINQGVDR) form a flexible loop region. ATP-binding positions include 164–166 (DAK), 230–231 (RF), Asp-239, 245–246 (RK), Ala-262, and Lys-266. Asp-239 is an L-methionine binding site. Lys-270 lines the L-methionine pocket.

It belongs to the AdoMet synthase family. In terms of assembly, homotetramer; dimer of dimers. The cofactor is Mg(2+). K(+) serves as cofactor.

It localises to the cytoplasm. The catalysed reaction is L-methionine + ATP + H2O = S-adenosyl-L-methionine + phosphate + diphosphate. Its pathway is amino-acid biosynthesis; S-adenosyl-L-methionine biosynthesis; S-adenosyl-L-methionine from L-methionine: step 1/1. In terms of biological role, catalyzes the formation of S-adenosylmethionine (AdoMet) from methionine and ATP. The overall synthetic reaction is composed of two sequential steps, AdoMet formation and the subsequent tripolyphosphate hydrolysis which occurs prior to release of AdoMet from the enzyme. The protein is S-adenosylmethionine synthase of Proteus mirabilis (strain HI4320).